Reading from the N-terminus, the 374-residue chain is GDSL esterase/lipase 1 (374 aa).

The signal sequence occupies residues 1-25; it reads MENSQLVSITFLAYTIIISIGSINC. A glycan (N-linked (GlcNAc...) asparagine) is linked at Asn-34. Ser-44 functions as the Nucleophile in the catalytic mechanism. 3 N-linked (GlcNAc...) asparagine glycosylation sites follow: Asn-184, Asn-203, and Asn-330. Active-site charge relay system residues include Asp-338 and His-341. Asn-360 carries N-linked (GlcNAc...) asparagine glycosylation.

Belongs to the 'GDSL' lipolytic enzyme family.

The protein resides in the secreted. In terms of biological role, confers resistance to the necrotrophic fungus Alternaria brassicicola. Possesses lipase and antimicrobial activities that directly disrupt fungal spore integrity. Triggers systemic resistance, mostly by the ethylene-dependent pathway. The chain is GDSL esterase/lipase 1 from Arabidopsis thaliana (Mouse-ear cress).